Consider the following 159-residue polypeptide: Phosphopantetheine adenylyltransferase (159 aa).

Thr10 is a binding site for substrate. ATP-binding positions include 10–11 (TF) and His18. Positions 42, 74, and 88 each coordinate substrate. Residues 89 to 91 (GLR), Glu99, and 124 to 130 (WSFISSS) contribute to the ATP site.

This sequence belongs to the bacterial CoaD family. As to quaternary structure, homohexamer. The cofactor is Mg(2+).

Its subcellular location is the cytoplasm. The enzyme catalyses (R)-4'-phosphopantetheine + ATP + H(+) = 3'-dephospho-CoA + diphosphate. Its pathway is cofactor biosynthesis; coenzyme A biosynthesis; CoA from (R)-pantothenate: step 4/5. In terms of biological role, reversibly transfers an adenylyl group from ATP to 4'-phosphopantetheine, yielding dephospho-CoA (dPCoA) and pyrophosphate. This is Phosphopantetheine adenylyltransferase from Escherichia fergusonii (strain ATCC 35469 / DSM 13698 / CCUG 18766 / IAM 14443 / JCM 21226 / LMG 7866 / NBRC 102419 / NCTC 12128 / CDC 0568-73).